The primary structure comprises 350 residues: Izumo sperm-egg fusion protein 1 (350 aa).

The first 21 residues, 1–21 (MGPHFTLLCAALAGCLLPAEG), serve as a signal peptide directing secretion. 5 disulfide bridges follow: cysteine 22/cysteine 149, cysteine 25/cysteine 152, cysteine 135/cysteine 159, cysteine 139/cysteine 165, and cysteine 182/cysteine 233. The Extracellular portion of the chain corresponds to 22-292 (CVICDPSVVL…LQPEKMLASR (271 aa)). The tract at residues 148–160 (WCKNCKKEVHACR) is important for interaction with IZUMO1R. The 85-residue stretch at 167-251 (ERNVEVPQME…PATIINFHVT (85 aa)) folds into the Ig-like C2-type domain. N-linked (GlcNAc...) asparagine glycosylation is present at asparagine 204. Residues 293–313 (LLGLLICGSLALITGLTFAIF) form a helical membrane-spanning segment. The Cytoplasmic portion of the chain corresponds to 314-350 (RRRKVIDFIKSSLFGLGSGAAEQTQVPKEKATDSRQQ). At serine 325 the chain carries Phosphoserine.

Belongs to the Izumo family. Monomer, homodimer; disulfide-linked and homooligomer; depending on the context. Interacts with IZUMO1R/JUNO. IZUMO1 and IZUMO1R/JUNO form a complex with 1:1 stoichiometry. In gamete recognition, IZUMO1R/JUNO first binds to monomeric IZUMO1. The weak, but specific interaction with IZUMO1R/JUNO induces IZUMO1 homodimerization. The process follows a tight binding phase where IZUMO1 bends the entire structure towards the sperm membrane side through a thiol-disulfide exchange reaction. The molecule no longer binds to IZUMO1R/JUNO and instead binds to a putative second oocyte receptor. Interacts with ACE3. Part of a oolemmal binding multimeric complex (IZUMO1 complex) composed at least of IZUMO1 and GLIPR1L1; the complex assemblage is influenced by the maturation status of the male germ cell. Interacts with GLIPR1L1. Interacts with FREY; the interaction retains IZUMO1 at the endoplasmic reticulum membrane and coordinates IZUMO1 complex assembly. Interacts with FCRL3/MAIA (via extracellular domain); the interaction replaces IZUMO1R/JUNO as IZUMO1 receptor after sperm-egg adhesion. Interacts with WDR54. Forms a complex with SPACA6 and TMEM81 on spermatocyte cell membrane. N-glycosylated. Glycosylation is not essential for fusion and for proper protein trafficking in sperm. Post-translationally, phosphorylated. The cytoplasmic C-terminus is phosphorylated and undergoes phosphorylation changes during epididymal transit. As to expression, sperm-specific (at protein level). Detectable on sperm surface only after the acrosome reaction.

It localises to the cell membrane. Its subcellular location is the cytoplasmic vesicle. The protein localises to the secretory vesicle. It is found in the acrosome membrane. Essential sperm cell-surface protein required for fertilization by acting as a ligand for IZUMO1R/JUNO receptor on egg. The IZUMO1:IZUMO1R/JUNO interaction is a necessary adhesion event between sperm and egg that is required for fertilization but is not sufficient for cell fusion. The ligand-receptor interaction probably does not act as a membrane 'fusogen'. Acts a ligand for the human-specific oolemma epitope FCRL3/MAIA during fertilization. FCRL3/MAIA replaces IZUMO1R/JUNO as IZUMO1 receptor after sperm-egg adhesion, which permits species-specific gamete fusion. Plays a critical role in sperm-oolemma binding prior to plasma membrane fusion. Can mediate cell-cell fusion in cultured mammalian cells independently of its binding to IZUMO1R/JUNO. The protein is Izumo sperm-egg fusion protein 1 of Homo sapiens (Human).